Consider the following 308-residue polypeptide: tRNA uridine(34) hydroxylase (308 aa).

Positions 129–223 (QEKDVLILDA…YGKHPETQGV (95 aa)) constitute a Rhodanese domain. Cys183 (cysteine persulfide intermediate) is an active-site residue.

This sequence belongs to the TrhO family.

It carries out the reaction uridine(34) in tRNA + AH2 + O2 = 5-hydroxyuridine(34) in tRNA + A + H2O. Its function is as follows. Catalyzes oxygen-dependent 5-hydroxyuridine (ho5U) modification at position 34 in tRNAs. The polypeptide is tRNA uridine(34) hydroxylase (Aster yellows witches'-broom phytoplasma (strain AYWB)).